Here is a 249-residue protein sequence, read N- to C-terminus: 2,3-bisphosphoglycerate-dependent phosphoglycerate mutase (249 aa).

Substrate-binding positions include 8–15 (RHGQSVWN), 21–22 (TG), Arg60, 87–90 (ERHY), Lys98, 114–115 (RR), and 183–184 (GN). The Tele-phosphohistidine intermediate role is filled by His9. Residue Glu87 is the Proton donor/acceptor of the active site.

The protein belongs to the phosphoglycerate mutase family. BPG-dependent PGAM subfamily. Homodimer.

The enzyme catalyses (2R)-2-phosphoglycerate = (2R)-3-phosphoglycerate. It participates in carbohydrate degradation; glycolysis; pyruvate from D-glyceraldehyde 3-phosphate: step 3/5. Catalyzes the interconversion of 2-phosphoglycerate and 3-phosphoglycerate. The protein is 2,3-bisphosphoglycerate-dependent phosphoglycerate mutase of Solidesulfovibrio magneticus (strain ATCC 700980 / DSM 13731 / RS-1) (Desulfovibrio magneticus).